Reading from the N-terminus, the 655-residue chain is Chaperone protein DnaK 3 (655 aa).

T197 is subject to Phosphothreonine; by autocatalysis.

This sequence belongs to the heat shock protein 70 family.

Acts as a chaperone. This Synechococcus sp. (strain ATCC 27144 / PCC 6301 / SAUG 1402/1) (Anacystis nidulans) protein is Chaperone protein DnaK 3.